The sequence spans 543 residues: Protein SGE1 (543 aa).

The Cytoplasmic portion of the chain corresponds to 1 to 8 (MKSTLSLT). A helical transmembrane segment spans residues 9 to 29 (LCVISLLLTLFLAALDIVIVV). Over 30 to 41 (TLYDTIGIKFHD) the chain is Extracellular. Residues 42 to 62 (FGNIGWLVTGYALSNAVFMLL) form a helical membrane-spanning segment. Residues 63–79 (WGRLAEILGTKECLMIS) are Cytoplasmic-facing. Residues 80 to 100 (VIVFEIGSLISALSNSMATLI) traverse the membrane as a helical segment. The Extracellular segment spans residues 101 to 103 (SGR). The helical transmembrane segment at 104–124 (VVAGFGGSGIESLAFVVGTSI) threads the bilayer. Topologically, residues 125-131 (VRENHRG) are cytoplasmic. Residues 132-152 (IMITALAISYVIAEGVGPFIG) form a helical membrane-spanning segment. Residues 153-162 (GAFNEHLSWR) lie on the Extracellular side of the membrane. Residues 163-183 (WCFYINLPIGAFAFIILAFCN) traverse the membrane as a helical segment. At 184–227 (TSGEPHQKMWLPSKIKKIMNYDYGELLKASFWKNTFEVLVFKLD) the chain is on the cytoplasmic side. Residues 228 to 248 (MVGIILSSAGFTLLMLGLSFG) form a helical membrane-spanning segment. Topologically, residues 249-255 (GNNFPWN) are extracellular. The chain crosses the membrane as a helical span at residues 256 to 276 (SGIIICFFTVGPILLLLFCAY). Topologically, residues 277-300 (DFHFLSLSGLHYDNKRIKPLLTWN) are cytoplasmic. A helical transmembrane segment spans residues 301 to 321 (IASNCGIFTSSITGFLSCFAY). The Extracellular portion of the chain corresponds to 322 to 341 (ELQSAYLVQLYQLVFKKKPT). Residues 342–362 (LASIHLWELSIPAMIATMAIA) form a helical membrane-spanning segment. Topologically, residues 363–373 (YLNSKYGIIKP) are cytoplasmic. A helical transmembrane segment spans residues 374–394 (AIVFGVLCGIVGSGLFTLING). Residues 395 to 399 (ELSQS) are Extracellular-facing. The chain crosses the membrane as a helical span at residues 400–420 (IGYSILPGIAFGSIFQATLLS). Topologically, residues 421 to 443 (SQVQITSDDPDFQNKFIEVTAFN) are cytoplasmic. A helical membrane pass occupies residues 444–464 (SFAKSLGFAFGGNMGAMIFTA). At 465-508 (SLKNQMRSSQLNIPQFTSVETLLAYSTEHYDGPQSSLSKFINTA) the chain is on the extracellular side. A helical membrane pass occupies residues 509 to 529 (IHDVFYCALGCYALSFFFGIF). The Cytoplasmic portion of the chain corresponds to 530 to 543 (TSSKKTTISAKKQQ).

It belongs to the major facilitator superfamily.

The protein resides in the membrane. Drug export permease. Multi-copy suppressor of loss-of-function mutation of GAL11. Involved specifically in transcription of GAL4-dependent genes. Can link GAL4 with the basal transcription machinery if GAL11 is missing. Confers resistance to 10-N-nonyl acridine orange (NAO) and in general to cationic dyes. The protein is Protein SGE1 (SGE1) of Saccharomyces cerevisiae (strain ATCC 204508 / S288c) (Baker's yeast).